Reading from the N-terminus, the 364-residue chain is UDP-N-acetylglucosamine--N-acetylmuramyl-(pentapeptide) pyrophosphoryl-undecaprenol N-acetylglucosamine transferase 1 (364 aa).

UDP-N-acetyl-alpha-D-glucosamine-binding positions include Thr-10–Gly-12, Asn-124, Ser-195, Ile-250, and Gln-295.

The protein belongs to the glycosyltransferase 28 family. MurG subfamily.

Its subcellular location is the cell membrane. The enzyme catalyses di-trans,octa-cis-undecaprenyl diphospho-N-acetyl-alpha-D-muramoyl-L-alanyl-D-glutamyl-meso-2,6-diaminopimeloyl-D-alanyl-D-alanine + UDP-N-acetyl-alpha-D-glucosamine = di-trans,octa-cis-undecaprenyl diphospho-[N-acetyl-alpha-D-glucosaminyl-(1-&gt;4)]-N-acetyl-alpha-D-muramoyl-L-alanyl-D-glutamyl-meso-2,6-diaminopimeloyl-D-alanyl-D-alanine + UDP + H(+). Its pathway is cell wall biogenesis; peptidoglycan biosynthesis. Functionally, cell wall formation. Catalyzes the transfer of a GlcNAc subunit on undecaprenyl-pyrophosphoryl-MurNAc-pentapeptide (lipid intermediate I) to form undecaprenyl-pyrophosphoryl-MurNAc-(pentapeptide)GlcNAc (lipid intermediate II). This Bacillus cereus (strain ATCC 14579 / DSM 31 / CCUG 7414 / JCM 2152 / NBRC 15305 / NCIMB 9373 / NCTC 2599 / NRRL B-3711) protein is UDP-N-acetylglucosamine--N-acetylmuramyl-(pentapeptide) pyrophosphoryl-undecaprenol N-acetylglucosamine transferase 1.